Consider the following 312-residue polypeptide: Methionyl-tRNA formyltransferase (312 aa).

107–110 (SLLP) serves as a coordination point for (6S)-5,6,7,8-tetrahydrofolate.

Belongs to the Fmt family.

The catalysed reaction is L-methionyl-tRNA(fMet) + (6R)-10-formyltetrahydrofolate = N-formyl-L-methionyl-tRNA(fMet) + (6S)-5,6,7,8-tetrahydrofolate + H(+). In terms of biological role, attaches a formyl group to the free amino group of methionyl-tRNA(fMet). The formyl group appears to play a dual role in the initiator identity of N-formylmethionyl-tRNA by promoting its recognition by IF2 and preventing the misappropriation of this tRNA by the elongation apparatus. The sequence is that of Methionyl-tRNA formyltransferase from Borreliella burgdorferi (strain ZS7) (Borrelia burgdorferi).